The chain runs to 313 residues: Small ribosomal subunit biogenesis GTPase RsgA (313 aa).

Positions 82-235 (REKLIAANAT…IIDSPGIQQF (154 aa)) constitute a CP-type G domain. GTP-binding positions include 127 to 130 (NKTD) and 177 to 185 (GQSGMGKST). Zn(2+)-binding residues include Cys259, Cys264, His266, and Cys272.

The protein belongs to the TRAFAC class YlqF/YawG GTPase family. RsgA subfamily. In terms of assembly, monomer. Associates with 30S ribosomal subunit, binds 16S rRNA. It depends on Zn(2+) as a cofactor.

The protein resides in the cytoplasm. In terms of biological role, one of several proteins that assist in the late maturation steps of the functional core of the 30S ribosomal subunit. Helps release RbfA from mature subunits. May play a role in the assembly of ribosomal proteins into the subunit. Circularly permuted GTPase that catalyzes slow GTP hydrolysis, GTPase activity is stimulated by the 30S ribosomal subunit. This Nitrosospira multiformis (strain ATCC 25196 / NCIMB 11849 / C 71) protein is Small ribosomal subunit biogenesis GTPase RsgA.